A 103-amino-acid polypeptide reads, in one-letter code: Small ribosomal subunit protein uS10 (103 aa).

It belongs to the universal ribosomal protein uS10 family. In terms of assembly, part of the 30S ribosomal subunit.

Involved in the binding of tRNA to the ribosomes. The chain is Small ribosomal subunit protein uS10 from Hydrogenovibrio crunogenus (strain DSM 25203 / XCL-2) (Thiomicrospira crunogena).